We begin with the raw amino-acid sequence, 36 residues long: Photosystem I reaction center subunit VIII (36 aa).

The chain crosses the membrane as a helical span at residues Pro-7–Tyr-29.

This sequence belongs to the PsaI family.

The protein resides in the plastid. It is found in the chloroplast thylakoid membrane. In terms of biological role, may help in the organization of the PsaL subunit. The sequence is that of Photosystem I reaction center subunit VIII from Psilotum nudum (Whisk fern).